Reading from the N-terminus, the 53-residue chain is Ferredoxin B (53 aa).

Residues 1–35 (GIDPNYRSLPVVKEEQGVKIYGTYEPPTKLGIWGT) are N-terminal extension. Lysine 29 carries the N6-methyllysine modification. The 4Fe-4S ferredoxin-type 1 domain maps to 34-53 (GTIVGVDFDLCIADGSCINA). Positions 44 and 50 each coordinate [3Fe-4S] cluster.

Requires [3Fe-4S] cluster as cofactor. [4Fe-4S] cluster serves as cofactor.

In terms of biological role, ferredoxins are iron-sulfur proteins that transfer electrons in a wide variety of metabolic reactions. This Sulfuracidifex metallicus (Sulfolobus metallicus) protein is Ferredoxin B.